Reading from the N-terminus, the 282-residue chain is NAD kinase (282 aa).

Asp-67 functions as the Proton acceptor in the catalytic mechanism. NAD(+)-binding positions include 67-68 (DG), 140-141 (NE), His-151, Arg-170, Asp-172, and 183-188 (TAYNLS).

Belongs to the NAD kinase family. A divalent metal cation serves as cofactor.

It is found in the cytoplasm. It carries out the reaction NAD(+) + ATP = ADP + NADP(+) + H(+). Its function is as follows. Involved in the regulation of the intracellular balance of NAD and NADP, and is a key enzyme in the biosynthesis of NADP. Catalyzes specifically the phosphorylation on 2'-hydroxyl of the adenosine moiety of NAD to yield NADP. The chain is NAD kinase from Halobacterium salinarum (strain ATCC 700922 / JCM 11081 / NRC-1) (Halobacterium halobium).